A 1086-amino-acid polypeptide reads, in one-letter code: Ribonuclease 3 (1086 aa).

Disordered stretches follow at residues 1 to 77 (MSDE…DSPR) and 158 to 233 (CHSM…LRNF). A compositionally biased stretch (basic residues) spans 13–23 (PKHKRARRKKY). Positions 24 to 35 (QKEYQERHKEEM) are enriched in basic and acidic residues. Polar residues predominate over residues 43–53 (FQNQPSTSSAP). Basic residues predominate over residues 159–168 (HSMKGRKTPK). The segment covering 181–190 (VSDDSNDSQD) has biased composition (acidic residues). Over residues 191 to 201 (EASTSEPTNRQ) the composition is skewed to polar residues. Residues 203-217 (PEADKTGEVKDEKQT) are compositionally biased toward basic and acidic residues. 2 RNase III domains span residues 607-781 (LDVF…LDGG) and 833-957 (FHAL…VDRG). Positions 694, 767, 770, 873, 943, and 946 each coordinate Mg(2+). Residues 984–1059 (DAKSHLQQWC…AELALANLES (76 aa)) form the DRBM domain.

Belongs to the ribonuclease III family. The cofactor is Mg(2+). It depends on Mn(2+) as a cofactor.

The protein localises to the nucleus. It carries out the reaction Endonucleolytic cleavage to 5'-phosphomonoester.. Functionally, executes the initial step of microRNA (miRNA) processing in the nucleus, that is the cleavage of pri-miRNA to release pre-miRNA. Involved in pre-rRNA processing. Cleaves double-strand RNA and does not cleave single-strand RNA. Involved in fertility. Required for the function or synthesis of the let-7 miRNA. The polypeptide is Ribonuclease 3 (drsh-1) (Caenorhabditis elegans).